The sequence spans 189 residues: Cancer/testis antigen family 45 member A3 (189 aa).

The disordered stretch occupies residues 81 to 119; that stretch reads KDRMMQKPGSNAPVGGNVTSSFSGDDLECRETASSPKSQ.

Belongs to the CT45 family. As to expression, testis specific. Expressed in cancer cell lines.

The protein resides in the nucleus. This chain is Cancer/testis antigen family 45 member A3, found in Homo sapiens (Human).